The following is a 280-amino-acid chain: Coiled-coil domain-containing protein 106 (280 aa).

A coiled-coil region spans residues 63–101 (TQLHMALERNSWLQKRIEDLEEERDFLRCQLDKFISSAR). Over residues 103 to 121 (EAEDHCRMKPGPRRMEGDS) the composition is skewed to basic and acidic residues. Residues 103-176 (EAEDHCRMKP…KPKARERQRV (74 aa)) are disordered. The residue at position 130 (S130) is a Phosphoserine. Over residues 133 to 146 (ESAASSLSGASEEG) the composition is skewed to low complexity. A Bipartite nuclear localization signal motif is present at residues 151 to 164 (RRRQKQKGGASRRR). Basic residues predominate over residues 152 to 168 (RRQKQKGGASRRRFGKP).

In terms of assembly, interacts with p53/TP53.

The protein resides in the nucleus. In terms of biological role, promotes the degradation of p53/TP53 protein and inhibits its transactivity. The chain is Coiled-coil domain-containing protein 106 (CCDC106) from Homo sapiens (Human).